A 319-amino-acid polypeptide reads, in one-letter code: Histidinol-phosphate aminotransferase 1 (319 aa).

Lys-182 carries the N6-(pyridoxal phosphate)lysine modification.

The protein belongs to the class-II pyridoxal-phosphate-dependent aminotransferase family. Histidinol-phosphate aminotransferase subfamily. Requires pyridoxal 5'-phosphate as cofactor.

The enzyme catalyses L-histidinol phosphate + 2-oxoglutarate = 3-(imidazol-4-yl)-2-oxopropyl phosphate + L-glutamate. Its pathway is amino-acid biosynthesis; L-histidine biosynthesis; L-histidine from 5-phospho-alpha-D-ribose 1-diphosphate: step 7/9. This is Histidinol-phosphate aminotransferase 1 (hisC1) from Archaeoglobus fulgidus (strain ATCC 49558 / DSM 4304 / JCM 9628 / NBRC 100126 / VC-16).